Reading from the N-terminus, the 794-residue chain is GPCWLWALALGLALGPRRCPAAPLNASAAPPERCRRPAACERLRFGSCLGSALPYAHTSTLLAADSGSQEEAHGKLLLWSGLRNAPRCWDVIQPLLCAVYMPKCEDGQVELPSQTLCQATRAPCTIVERERGWPDFLKCTPDRFPEGCPNEVQNIKFNSSGQCEAPLVRTYNPKSWYEDVEGCGIQCQNPLFTETEHREMHVYIAFSSVTISCTFFTLATFVADWRNSNRYPAVILFYVNACFFVGSIGCVAQFMDGARDEIVCRADGTMRLGEPTSNETLSCVIIFVIVYYSLMSGVIWFVMLTYAWHTSFKALGTTYQPLLGKTSYFHLITWSIPFVLTVAILAVAQVDGDSVSGICFVGYKNYRYRAGFVLAPIGLVLIVGGYFLIRGVMTLFSIKSNHPGLLSEKAASKINETMLRLGIFGFLAFGFVFITFGCHFYDFFNQAEWERSFREYVLCEANVTIATQTNKPIPECEIKNRPSLLVEKINLFAMFGTGISMSTWVWTKATLLIWKRTWCRLTGQSDDQPKRIKKSKMIAKAFSKRKELLRDPGRELSFSMHTVSHDGPVAGLAFDINEPSADVSSAWAQHVTKMVARRGAILPQDVSVTPVATPVPPEERSNLWVVEADVSPELQKRSRKKKRRKKKKEEVCPERRAGLSVAPLTPSSVPRLPRLPQQPCLVAIPRHRGDTFIPTVLPGLSNGAGGLWDGRRRAHVPHFITNPFCPESGSPEDEENPGPSVGHRQHNGGRRWPPEPLPGGSGVTRTRGRRAGLAPIHSRTNLVNAELLDADLDF.

Positions 1-15 are cleaved as a signal peptide; sequence GPCWLWALALGLALG. Topologically, residues 16 to 201 are extracellular; the sequence is PRRCPAAPLN…FTETEHREMH (186 aa). N-linked (GlcNAc...) asparagine glycosylation is present at N25. Disulfide bonds link C34-C148, C40-C104, C48-C97, C88-C124, and C117-C139. The FZ domain occupies 35–151; the sequence is RRPAACERLR…DRFPEGCPNE (117 aa). D65 provides a ligand contact to cholesterol. N-linked (GlcNAc...) asparagine glycosylation occurs at N158. Intrachain disulfides connect C163–C183 and C187–C264. The chain crosses the membrane as a helical span at residues 202 to 222; that stretch reads VYIAFSSVTISCTFFTLATFV. Residues 223–231 lie on the Cytoplasmic side of the membrane; it reads ADWRNSNRY. A helical transmembrane segment spans residues 232–252; it reads PAVILFYVNACFFVGSIGCVA. Topologically, residues 253–283 are extracellular; sequence QFMDGARDEIVCRADGTMRLGEPTSNETLSC. The N-linked (GlcNAc...) asparagine glycan is linked to N278. A disulfide bond links C283 and C359. Residues 284 to 304 form a helical membrane-spanning segment; sequence VIIFVIVYYSLMSGVIWFVML. Topologically, residues 305 to 327 are cytoplasmic; that stretch reads TYAWHTSFKALGTTYQPLLGKTS. A helical membrane pass occupies residues 328–348; the sequence is YFHLITWSIPFVLTVAILAVA. Residues 349–371 are Extracellular-facing; that stretch reads QVDGDSVSGICFVGYKNYRYRAG. Y363 contacts cholesterol. Residues 372–392 form a helical membrane-spanning segment; that stretch reads FVLAPIGLVLIVGGYFLIRGV. Residues 393-420 lie on the Cytoplasmic side of the membrane; sequence MTLFSIKSNHPGLLSEKAASKINETMLR. The chain crosses the membrane as a helical span at residues 421–440; it reads LGIFGFLAFGFVFITFGCHF. Over 441–493 the chain is Extracellular; the sequence is YDFFNQAEWERSFREYVLCEANVTIATQTNKPIPECEIKNRPSLLVEKINLFA. C459 and C476 are oxidised to a cystine. The N-linked (GlcNAc...) asparagine glycan is linked to N462. Residues 494–514 traverse the membrane as a helical segment; that stretch reads MFGTGISMSTWVWTKATLLIW. Over 515-794 the chain is Cytoplasmic; the sequence is KRTWCRLTGQ…AELLDADLDF (280 aa). Disordered regions lie at residues 634–655 and 723–773; these read LQKRSRKKKRRKKKKEEVCPER and PFCP…RAGL. Residues 637–647 show a composition bias toward basic residues; that stretch reads RSRKKKRRKKK.

It belongs to the G-protein coupled receptor Fz/Smo family. As to quaternary structure, homodimer.

It localises to the cell membrane. The protein resides in the cell projection. It is found in the cilium. In terms of biological role, g protein-coupled receptor which associates with the patched protein (PTCH) to transduce hedgehog protein signaling. Binding of sonic hedgehog (SHH) to its receptor patched prevents inhibition of smoothened (SMO) by patched. When active, SMO binds to and sequesters protein kinase A catalytic subunit PRKACA at the cell membrane, preventing PRKACA-mediated phosphorylation of GLI transcription factors which releases the GLI proteins from PRKACA-mediated inhibition and allows for transcriptional activation of hedgehog pathway target genes. The chain is Protein smoothened (SMO) from Gallus gallus (Chicken).